The primary structure comprises 288 residues: ATP synthase gamma chain (288 aa).

It belongs to the ATPase gamma chain family. F-type ATPases have 2 components, CF(1) - the catalytic core - and CF(0) - the membrane proton channel. CF(1) has five subunits: alpha(3), beta(3), gamma(1), delta(1), epsilon(1). CF(0) has three main subunits: a, b and c.

It localises to the cell inner membrane. Its function is as follows. Produces ATP from ADP in the presence of a proton gradient across the membrane. The gamma chain is believed to be important in regulating ATPase activity and the flow of protons through the CF(0) complex. This is ATP synthase gamma chain from Chromobacterium violaceum (strain ATCC 12472 / DSM 30191 / JCM 1249 / CCUG 213 / NBRC 12614 / NCIMB 9131 / NCTC 9757 / MK).